The sequence spans 108 residues: Phosphoribosyl-AMP cyclohydrolase (108 aa).

D78 provides a ligand contact to Mg(2+). C79 is a binding site for Zn(2+). Mg(2+) is bound by residues D80 and D82. Zn(2+) contacts are provided by C95 and C102.

Belongs to the PRA-CH family. Homodimer. Mg(2+) is required as a cofactor. The cofactor is Zn(2+).

It localises to the cytoplasm. It carries out the reaction 1-(5-phospho-beta-D-ribosyl)-5'-AMP + H2O = 1-(5-phospho-beta-D-ribosyl)-5-[(5-phospho-beta-D-ribosylamino)methylideneamino]imidazole-4-carboxamide. It participates in amino-acid biosynthesis; L-histidine biosynthesis; L-histidine from 5-phospho-alpha-D-ribose 1-diphosphate: step 3/9. Catalyzes the hydrolysis of the adenine ring of phosphoribosyl-AMP. The protein is Phosphoribosyl-AMP cyclohydrolase of Nitrosopumilus maritimus (strain SCM1).